A 2297-amino-acid chain; its full sequence is Xin actin-binding repeat-containing protein 1 (2297 aa).

The segment covering M1–T11 has biased composition (basic and acidic residues). The interval M1–P28 is disordered. 9 Xin repeats span residues G104–D119, G139–D154, G169–D184, G208–D223, G248–C263, S286–D301, G323–D338, A362–S377, and G396–D411. Over residues G433–F442 the composition is skewed to basic and acidic residues. The interval G433 to D461 is disordered. 14 Xin repeats span residues G464–N479, G494–Y509, G532–D547, D570–D585, S605–D620, A638–D653, V677–D692, G715–G730, G747–G762, G779–D794, V818–Y833, G856–D871, G893–D908, and K928–S943. S952 is modified (phosphoserine). Xin repeat units lie at residues G959–D974, G997–D1012, and A1033–D1048. Disordered stretches follow at residues P1617 to K1680, K1866 to I1900, S2147 to K2191, and E2243 to H2297. Composition is skewed to low complexity over residues S1618–T1630 and S1644–S1656. 2 stretches are compositionally biased toward basic and acidic residues: residues S1876–S1885 and K2151–T2162. Positions Q2166–S2180 are enriched in low complexity. The span at G2259–S2278 shows a compositional bias: polar residues.

It belongs to the Xin family. As to expression, expressed at intercalated disks in the heart (at protein level).

The protein resides in the cell junction. The protein localises to the adherens junction. Its subcellular location is the desmosome. In terms of biological role, positively regulates organization of the outer plexiform layer and Muller glia cells in the retina. May protect actin filaments from depolymerization. May play a role in development of normal skeletal muscle morphology and muscle fiber type composition. This chain is Xin actin-binding repeat-containing protein 1, found in Danio rerio (Zebrafish).